A 247-amino-acid chain; its full sequence is MSVDKEELVQRAKLAEQAERYDDMAAAMKEVTETGVELSNEERNLLSVAYKNVVGARRSSWRVISSIEQKTEGSERKQQMAKEYRVKVEKELREICYDVLGLLDKHLIPKASNPESKVFYLKMKGDYYRYLAEVATGETRHSVVEDSQKAYQDAFEISKAKMQPTHPIRLGLALNFSVFYYEILNSPDKACQLAKQAFDDAIAELDTLNEDSYKDSTLIMQLLRDNLTLWTSDTQGDGDEPAEGGDN.

It belongs to the 14-3-3 family. In terms of assembly, homodimer.

The protein localises to the cytoplasm. Its function is as follows. Adapter protein implicated in the regulation of a large spectrum of both general and specialized signaling pathways. Binds to a large number of partners, usually by recognition of a phosphoserine or phosphothreonine motif. Binding generally results in the modulation of the activity of the binding partner. This is 14-3-3 protein zeta (14-3-3zeta) from Bombyx mori (Silk moth).